A 696-amino-acid polypeptide reads, in one-letter code: Caprolactamase subunit alpha (696 aa).

The protein belongs to the HyuA family. In terms of assembly, the caprolactamase is a heterotetramer composed of two alpha subunits (CapA) and two beta subunits (CapB).

With respect to regulation, activity is dependent on the presence of ATP and bicarbonate. The requirement for bicarbonate may be related to allosteric activation through conformational effects, but it is also conceivable that carboxyphosphate is formed and acts as a mediator in caprolactam activation, forming carboxy- or phospholactim. Its function is as follows. Component of a caprolactamase involved in the degradation of caprolactam, an industrial compound mainly used in the production of Nylon 6. Catalyzes the ATP-dependent hydrolysis of the caprolactam ring to form 6-aminocaproic acid (6-ACA). The alpha subunit is responsible for ATP-dependent substrate phosphorylation. The enzyme cannot use 5-oxoproline. The protein is Caprolactamase subunit alpha of Pseudomonas jessenii.